The following is a 156-amino-acid chain: Endoribonuclease YbeY (156 aa).

Residues His122, His126, and His132 each contribute to the Zn(2+) site.

It belongs to the endoribonuclease YbeY family. Zn(2+) serves as cofactor.

It is found in the cytoplasm. Functionally, single strand-specific metallo-endoribonuclease involved in late-stage 70S ribosome quality control and in maturation of the 3' terminus of the 16S rRNA. This chain is Endoribonuclease YbeY, found in Geobacillus sp. (strain WCH70).